Reading from the N-terminus, the 1273-residue chain is Lysine-specific histone demethylase 2 (1273 aa).

Over residues 199 to 230 the composition is skewed to polar residues; that stretch reads ENFFDANSPSSQQFPSTYPSRSQNPLSSSGDG. A disordered region spans residues 199 to 237; the sequence is ENFFDANSPSSQQFPSTYPSRSQNPLSSSGDGSTAIHAG. The stretch at 247 to 307 forms a coiled coil; the sequence is FSNYPYPLDA…LSKSVDNAVL (61 aa). The 97-residue stretch at 394 to 490 folds into the SWIRM domain; it reads AAEAARKCNL…YGCLSFDSSF (97 aa). FAD contacts are provided by residues 509–551, T517, E550, R558, and 572–573; these read IAVV…ILEA and TQ. A demethylase activity region spans residues 542–1198; it reads LPPKVIILEA…GKILRYQRLT (657 aa). The tract at residues 571–596 is disordered; sequence ATQINHHTSNSNSISSNSTSLNPKDV. Positions 574 to 590 are enriched in low complexity; it reads INHHTSNSNSISSNSTS. A coiled-coil region spans residues 681-767; it reads SVRISWISQF…NTVDTDFSKD (87 aa). Residues 1115-1195 constitute a DNA-binding region (HMG box); sequence SKPNANPFLL…AYAGKILRYQ (81 aa). FAD contacts are provided by residues D1147 and 1156-1157; that span reads ET. The disordered stretch occupies residues 1215 to 1273; sequence KCQDEPIPDDEARLFMQAQREEEQRKQTQDDNISKSREASDEEYHDDGSSDSGYNGTRY. The span at 1233–1253 shows a compositional bias: basic and acidic residues; sequence QREEEQRKQTQDDNISKSREA. A compositionally biased stretch (polar residues) spans 1264–1273; sequence SDSGYNGTRY.

The protein belongs to the flavin monoamine oxidase family. As to quaternary structure, component of the SWM histone demethylase complex composed of at least lsd1, lsd2, phf1 and phf2. Interacts directly with lsd1. It depends on FAD as a cofactor.

The protein localises to the nucleus. Catalytic component of the SWM histone demethylase complex that specifically demethylates H3K9me2, a specific tag for epigenetic transcriptional activation, thereby acting as a corepressor. Acts by oxidizing the substrate by FAD to generate the corresponding imine that is subsequently hydrolyzed. Has a role in regulating heterochromatin propagation and euchromatic transcription. Also has a gene activating role. The sequence is that of Lysine-specific histone demethylase 2 (lsd2) from Schizosaccharomyces pombe (strain 972 / ATCC 24843) (Fission yeast).